A 422-amino-acid polypeptide reads, in one-letter code: E3 ubiquitin-protein ligase IE2 (422 aa).

The segment covering 1–10 has biased composition (polar residues); it reads MSRQINAVTP. 2 disordered regions span residues 1–86 and 165–215; these read MSRQ…VQII and SPRS…EGEE. Residues 14-26 show a composition bias toward basic residues; sequence SRRHRLSLSRRRI. Positions 36-63 are enriched in low complexity; the sequence is PSSSSRSQPSSSSRSQPYSSSRSQPYSS. Residues 71–80 are compositionally biased toward basic and acidic residues; sequence ERSQEQRVSE. A compositionally biased stretch (polar residues) spans 179–196; the sequence is DVLSQSPDLFDSPQSPQQ. Positions 200–215 are enriched in acidic residues; sequence ELEDEDEEEEEEEGEE. Residues 220–268 form an RING-type; degenerate zinc finger; the sequence is CNICFTTLKDTKNVDSSFVTSIDCNHAVCFKCYVRIIMDNSTYKCFCSA. Residues 314-414 are a coiled coil; the sequence is IDLNDVERLE…RRNSELVAEL (101 aa).

The protein belongs to the alphabaculovirus IE2 protein family. In terms of assembly, homooligomer. Post-translationally, auto-ubiquitinated.

It is found in the host nucleus. The enzyme catalyses S-ubiquitinyl-[E2 ubiquitin-conjugating enzyme]-L-cysteine + [acceptor protein]-L-lysine = [E2 ubiquitin-conjugating enzyme]-L-cysteine + N(6)-ubiquitinyl-[acceptor protein]-L-lysine.. Its function is as follows. RING-finger E3 ubiquitin ligase that plays an important regulatory role during the initial stages of infection. Migrates to specific nuclear foci early in infection supposely to prepare the sites for viral replication by targeting and ubiquitinating host proteins. This Bombyx mori nuclear polyhedrosis virus (BmNPV) protein is E3 ubiquitin-protein ligase IE2 (IE2).